The chain runs to 155 residues: Ribosomal RNA large subunit methyltransferase H (155 aa).

S-adenosyl-L-methionine-binding positions include L72, G103, and 122 to 127; that span reads LSPLTL.

Belongs to the RNA methyltransferase RlmH family. As to quaternary structure, homodimer.

The protein localises to the cytoplasm. The catalysed reaction is pseudouridine(1915) in 23S rRNA + S-adenosyl-L-methionine = N(3)-methylpseudouridine(1915) in 23S rRNA + S-adenosyl-L-homocysteine + H(+). In terms of biological role, specifically methylates the pseudouridine at position 1915 (m3Psi1915) in 23S rRNA. This Haemophilus ducreyi (strain 35000HP / ATCC 700724) protein is Ribosomal RNA large subunit methyltransferase H.